The chain runs to 342 residues: MKKQWIAGAFGLTAALAGLVSVPQSALAWPSFAAGYEEARESSGKIVCANCHLAVKPTEIEVPQSVLPGKVFDLKIHVPYDTKIQQVGADGSPAPMQIGAYIQLPEGFTVADEKEWSAEAKESIEKYGGVTPLYADKPERSNILIINQIDGSTVPGQEFIVPVKPPDPNAKDAKVNFGKYGVYVGANRGRGQVYSNGVASNTAQYNAPVAGTISAVQTGVTFTDKLQYGLGTEATDFEYTNGTRVTITDEKGKASIVNIPPGPKLLDTVKQGAQIKAGQPLTNDPNVGGYGQEERDIVLQDPQRVTWLVAFLAAAFICQLLLVLKKKQVEKVQEFEAQKQGL.

The first 28 residues, 1-28, serve as a signal peptide directing secretion; that stretch reads MKKQWIAGAFGLTAALAGLVSVPQSALA. Residues Cys-48, Cys-51, and His-52 each contribute to the heme site. A helical membrane pass occupies residues 305–325; that stretch reads VTWLVAFLAAAFICQLLLVLK.

It belongs to the cytochrome f family. In terms of assembly, the 4 large subunits of the cytochrome b6-f complex are cytochrome b6, subunit IV (17 kDa polypeptide, PetD), cytochrome f and the Rieske protein, while the 4 small subunits are PetG, PetL, PetM and PetN. The complex functions as a dimer. Heme is required as a cofactor.

The protein resides in the cell inner membrane. Its function is as follows. Component of the cytochrome b6-f complex, which mediates electron transfer between photosystem II (PSII) and photosystem I (PSI), cyclic electron flow around PSI, and state transitions. The protein is Cytochrome f (petA) of Gloeobacter violaceus (strain ATCC 29082 / PCC 7421).